Consider the following 346-residue polypeptide: Protein Spea_1705 (346 aa).

Cysteine 101 serves as the catalytic Proton acceptor. Substrate is bound by residues 102 to 103 (GH), aspartate 262, and 267 to 268 (GT).

Belongs to the proline racemase family.

The enzyme catalyses trans-3-hydroxy-L-proline = 1-pyrroline-2-carboxylate + H2O. Its function is as follows. In vitro, catalyzes the dehydration of trans-3-hydroxy-L-proline (t3LHyp) to Delta(1)-pyrroline-2-carboxylate (Pyr2C), albeit with very low efficiency. The physiological substrate may be different. Displays neither trans-4-hydroxy-L-proline (t4LHyp) epimerase nor proline racemase activity. The sequence is that of Protein Spea_1705 from Shewanella pealeana (strain ATCC 700345 / ANG-SQ1).